The primary structure comprises 175 residues: NAD(P)H-quinone oxidoreductase subunit J (175 aa).

The protein belongs to the complex I 30 kDa subunit family. As to quaternary structure, NDH-1 can be composed of about 15 different subunits; different subcomplexes with different compositions have been identified which probably have different functions.

The protein localises to the cellular thylakoid membrane. The catalysed reaction is a plastoquinone + NADH + (n+1) H(+)(in) = a plastoquinol + NAD(+) + n H(+)(out). The enzyme catalyses a plastoquinone + NADPH + (n+1) H(+)(in) = a plastoquinol + NADP(+) + n H(+)(out). In terms of biological role, NDH-1 shuttles electrons from an unknown electron donor, via FMN and iron-sulfur (Fe-S) centers, to quinones in the respiratory and/or the photosynthetic chain. The immediate electron acceptor for the enzyme in this species is believed to be plastoquinone. Couples the redox reaction to proton translocation, and thus conserves the redox energy in a proton gradient. Cyanobacterial NDH-1 also plays a role in inorganic carbon-concentration. This Trichormus variabilis (strain ATCC 29413 / PCC 7937) (Anabaena variabilis) protein is NAD(P)H-quinone oxidoreductase subunit J.